We begin with the raw amino-acid sequence, 63 residues long: MDENRQVRFFQPFKKMFQTSQTSSVTGWIGSCVGGTSVSLLRLDGPKRPCVYPSIFIAVWKTK.

It localises to the mitochondrion. This is an uncharacterized protein from Marchantia polymorpha (Common liverwort).